Reading from the N-terminus, the 148-residue chain is 3-dehydroquinate dehydratase (148 aa).

The Proton acceptor role is filled by Tyr22. 3 residues coordinate substrate: Asn73, His79, and Asp86. His99 acts as the Proton donor in catalysis. Residues 100–101 (LS) and Arg110 each bind substrate.

It belongs to the type-II 3-dehydroquinase family. In terms of assembly, homododecamer.

The catalysed reaction is 3-dehydroquinate = 3-dehydroshikimate + H2O. It participates in metabolic intermediate biosynthesis; chorismate biosynthesis; chorismate from D-erythrose 4-phosphate and phosphoenolpyruvate: step 3/7. In terms of biological role, catalyzes a trans-dehydration via an enolate intermediate. The protein is 3-dehydroquinate dehydratase of Prochlorococcus marinus (strain MIT 9211).